The sequence spans 269 residues: GATA zinc finger domain-containing protein 1 (269 aa).

The segment at 9–33 (CSVCKTTSSSMWKKGAQGEILCHHC) adopts a GATA-type zinc-finger fold. The tract at residues 63-115 (ATFASTSATPPQSNGGGGGKQSKQEIHRRSARLRNTKYKSAPAAEKKVSTKGK) is disordered. K262 is covalently cross-linked (Glycyl lysine isopeptide (Lys-Gly) (interchain with G-Cter in SUMO2)).

In terms of assembly, component of a chromatin complex, at least composed of KDM5A, GATAD1 and EMSY. Ubiquitously expressed among various tissue types. Expressed in left ventricular myocytes.

It localises to the nucleus. Component of some chromatin complex recruited to chromatin sites methylated 'Lys-4' of histone H3 (H3K4me), with a preference for trimethylated form (H3K4me3). This is GATA zinc finger domain-containing protein 1 (GATAD1) from Homo sapiens (Human).